The following is a 295-amino-acid chain: Protease HtpX (295 aa).

The next 2 helical transmembrane spans lie at 4-24 (ILLF…TLSL) and 42-62 (QLLV…LFIS). Residue His-147 participates in Zn(2+) binding. The active site involves Glu-148. Residue His-151 participates in Zn(2+) binding. 2 helical membrane passes run 158–178 (VTLA…ARII) and 195–215 (IAYF…ASAI). Glu-224 is a binding site for Zn(2+).

Belongs to the peptidase M48B family. Requires Zn(2+) as cofactor.

The protein localises to the cell inner membrane. In Pseudomonas fluorescens (strain SBW25), this protein is Protease HtpX.